We begin with the raw amino-acid sequence, 183 residues long: Ubiquitin-conjugating enzyme E2 6 (183 aa).

The 148-residue stretch at 1-148 (MASPSKRREM…VKEYCEKYAK (148 aa)) folds into the UBC core domain. The active-site Glycyl thioester intermediate is the Cys85. Residues 148–183 (KPEEILSDDDDDDSMSEDGSDSDDDDDDEIVGKADP) form a disordered region. Acidic residues predominate over residues 152–176 (ILSDDDDDDSMSEDGSDSDDDDDDE).

The protein belongs to the ubiquitin-conjugating enzyme family. Expressed in roots, petals, sepals and silique walls.

The enzyme catalyses S-ubiquitinyl-[E1 ubiquitin-activating enzyme]-L-cysteine + [E2 ubiquitin-conjugating enzyme]-L-cysteine = [E1 ubiquitin-activating enzyme]-L-cysteine + S-ubiquitinyl-[E2 ubiquitin-conjugating enzyme]-L-cysteine.. It functions in the pathway protein modification; protein ubiquitination. Accepts the ubiquitin from the E1 complex and catalyzes its covalent attachment to other proteins. This chain is Ubiquitin-conjugating enzyme E2 6 (UBC6), found in Arabidopsis thaliana (Mouse-ear cress).